A 504-amino-acid chain; its full sequence is Syntaphilin (504 aa).

Residues 1-74 (MAMSLQGSRR…HGIKPPTPEQ (74 aa)) form a disordered region. 2 stretches are compositionally biased toward low complexity: residues 7-26 (GSRR…VSVR) and 33-49 (SLSS…SDSS). Positions 79–161 (LQQKEVCIRH…VKNNLIDKDK (83 aa)) form a coiled coil. The disordered stretch occupies residues 191 to 244 (VAKEEGTGESAGGSPARSLTRSSTYTKLSDPAVCGDRQAGDPSNTPAEDRADSG). Residues serine 200 and serine 204 each carry the phosphoserine modification. Residues 207–217 (RSLTRSSTYTK) are compositionally biased toward polar residues. Threonine 214 is subject to Phosphothreonine. A Phosphoserine modification is found at serine 219. Threonine 235 carries the post-translational modification Phosphothreonine. The helical transmembrane segment at 437–456 (YIVDLLAVVVPAVPTVAWLC) threads the bilayer.

Binds to STX1A. Interacts with DNM1; this interaction inhibits the binding of DNM1 to AMPH and DNM1-receptor-mediated endocytosis.

The protein localises to the membrane. The protein resides in the synapse. It is found in the synaptosome. In terms of biological role, inhibits SNARE complex formation by absorbing free STX1A. The sequence is that of Syntaphilin from Rattus norvegicus (Rat).